The primary structure comprises 82 residues: U16-lycotoxin-Ls1a (82 aa).

A signal peptide spans 1–22; the sequence is MSPKVQALLLLVGLITFLAVHA. Residues 23 to 34 constitute a propeptide that is removed on maturation; that stretch reads EEELSETVESER. 4 disulfide bridges follow: cysteine 36–cysteine 51, cysteine 43–cysteine 56, cysteine 50–cysteine 67, and cysteine 58–cysteine 65.

Belongs to the neurotoxin 02 (plectoxin) family. 04 (U16-lycotoxin) subfamily. In terms of tissue distribution, expressed by the venom gland.

It is found in the secreted. This Lycosa singoriensis (Wolf spider) protein is U16-lycotoxin-Ls1a.